The sequence spans 424 residues: Serine hydroxymethyltransferase 2 (424 aa).

(6S)-5,6,7,8-tetrahydrofolate is bound by residues Leu-125 and 129-131 (GHL). N6-(pyridoxal phosphate)lysine is present on Lys-234. Residue Glu-250 participates in (6S)-5,6,7,8-tetrahydrofolate binding.

Belongs to the SHMT family. As to quaternary structure, homodimer. Pyridoxal 5'-phosphate serves as cofactor.

It is found in the cytoplasm. The enzyme catalyses (6R)-5,10-methylene-5,6,7,8-tetrahydrofolate + glycine + H2O = (6S)-5,6,7,8-tetrahydrofolate + L-serine. The protein operates within one-carbon metabolism; tetrahydrofolate interconversion. Its pathway is amino-acid biosynthesis; glycine biosynthesis; glycine from L-serine: step 1/1. Functionally, catalyzes the reversible interconversion of serine and glycine with tetrahydrofolate (THF) serving as the one-carbon carrier. This reaction serves as the major source of one-carbon groups required for the biosynthesis of purines, thymidylate, methionine, and other important biomolecules. Also exhibits THF-independent aldolase activity toward beta-hydroxyamino acids, producing glycine and aldehydes, via a retro-aldol mechanism. The polypeptide is Serine hydroxymethyltransferase 2 (Burkholderia pseudomallei (strain 1710b)).